Here is a 249-residue protein sequence, read N- to C-terminus: MTRKLVLLRHGQSQWNLDNRFTGWVDVDLTEQGRQEAAAAGKLMKDEGLQFDVAYTSVLKRAIHTLQGALKELDQDWLPVHKSWRLNERHYGGLQGLDKAETAAKHGEEQVKIWRRSYDIPPPAMDVTDPGHPGHDRRYATLDRNALPGTESLATTLVRVLPYWHDAIAPQLKAGQTVLVTAHGNSLRALYKYLNDISNAQILELNIPTGIPLLFELDDNLRVQSYRYLGDPEAAKRAAEAVANQGKAK.

Substrate contacts are provided by residues 9 to 16 (RHGQSQWN), 22 to 23 (TG), Arg-61, 88 to 91 (ERHY), Lys-99, 115 to 116 (RR), and 184 to 185 (GN). His-10 acts as the Tele-phosphohistidine intermediate in catalysis. Glu-88 functions as the Proton donor/acceptor in the catalytic mechanism.

This sequence belongs to the phosphoglycerate mutase family. BPG-dependent PGAM subfamily. Homodimer.

The catalysed reaction is (2R)-2-phosphoglycerate = (2R)-3-phosphoglycerate. The protein operates within carbohydrate degradation; glycolysis; pyruvate from D-glyceraldehyde 3-phosphate: step 3/5. Functionally, catalyzes the interconversion of 2-phosphoglycerate and 3-phosphoglycerate. The protein is 2,3-bisphosphoglycerate-dependent phosphoglycerate mutase of Xanthomonas campestris pv. campestris (strain B100).